Here is a 1024-residue protein sequence, read N- to C-terminus: MTMITDSLAVVLQRRDWENPGVTQLNRLAAHPPFASWRNSEEARTNRPSQQLRSLNGEWQFVWFPAPEAVPESWLECDLPDADTVVVPSNWQMHGYDAPIYTNVTYPITVNPPFVPTENPTGCYSLTFNVDESWLQEGQTRIIFDGVNSAFHLWCNGRWVGYGQDSRLLSEFDLSAFLRAGENRLAVMVLRWSDGSYLEDQDMWRMSGIFRDVSLLHKPTTQISDFHVATLFNDDFSRAVLEAEVQMYGELRDELRVTVSLWQGETQVASGTAPFGGEIIDERGGYADRVTLGLNVENPKLWSAEIPNIYRAVVELHTADGTLIEAEACDVGFREVRIENGLLLLNGKPLLIRGVNRHEHHPLHGQVMDEQTMVQDILLMKQNNFNAVRCSHYPNHPLWYTLCDRYGLYVVDEANIETHGMVPMNRLTDDPRWLPAMSERVTRMVQRDRNHPSVIIWSLGNESGHGANHDALYRWIKSVDPSRPVQYEGGGADTSATDIICPMYARVDEDQPFPAVPKWSIKKWLSLPGEMRPLILCEYAHAMGNSLGGFAKYWQAFRQYPRLQGGFVWDLVDQSLIKYDENGNPWSAYGGDFGDTPNDRQFCMNGLVFADRTPHPALTEAKHQQQFFQFRLSGRTIEVTSEYLFRHSDNELLHWTVALDGKPLASGEVPLDVAPQGKQVIELPELPRLESTGQLWLTVHVVQPNATAWSEAGHISAWQQWRLAENLSVTLPSAPHAIPQLTTSETDFCIELDNKRWQFNRQSGFLSQMWIGDKKQLLTPLRDQFTRAPLDNDIGVSEATRIDPNAWVERWKAAGHYQAEAALLQCTADTLADAVLITTVHAWQHQGKTLFISRKTYRIDGSGQMAITVDVEVASDTPHPARIGLTCQLAQVAERVNWLGLGPQENYPDRLTAACFDRWDLPLSDMYTPYVFPSENGLRCGTRELNYGPHQWRGDFQFNISRYSQQQLMETSHRHLLHAEEGTWLNIDGFHMGIGGDDSWSPSVSAEFQLSAGRYHYQLVWCQK.

Substrate contacts are provided by Asn-103 and Asp-202. A Na(+)-binding site is contributed by Asp-202. Positions 417, 419, and 462 each coordinate Mg(2+). Residues Glu-462 and Glu-538–His-541 each bind substrate. The Proton donor role is filled by Glu-462. Glu-538 acts as the Nucleophile in catalysis. Asn-598 is a Mg(2+) binding site. Na(+) contacts are provided by Phe-602 and Asn-605. Residues Asn-605 and Trp-1000 each contribute to the substrate site.

Belongs to the glycosyl hydrolase 2 family. Homotetramer. The cofactor is Mg(2+). Na(+) serves as cofactor.

The catalysed reaction is Hydrolysis of terminal non-reducing beta-D-galactose residues in beta-D-galactosides.. This Escherichia coli O157:H7 protein is Beta-galactosidase.